The sequence spans 559 residues: S-layer protein (559 aa).

A signal peptide spans Met1 to Ala28. Asn108, Asn130, Asn155, Asn222, and Asn373 each carry an N-linked (GlcNAc...) asparagine glycan.

The protein belongs to the Mj S-layer protein family.

The protein resides in the secreted. The protein localises to the cell wall. It is found in the S-layer. In terms of biological role, S-layer protein. The S-layer is a paracrystalline mono-layered assembly of proteins which coat the surface of the cell. The chain is S-layer protein from Methanothermococcus thermolithotrophicus (Methanococcus thermolithotrophicus).